The sequence spans 508 residues: Histone acetyltransferase esa1 (508 aa).

One can recognise a Tudor-knot domain in the interval 27-80 (IRIGVKAMVHKDGALRKAEILSIKQRKDGLAFYVHYVDFNKRLDEWVASSRLDL). Residues 84–150 (VEWPQPEKPE…GKENRGDETP (67 aa)) form a disordered region. The span at 119-131 (TPDTLTGKNTNVG) shows a compositional bias: polar residues. The MYST-type HAT domain occupies 220-496 (HRVRNLDRLQ…IDPARLQWKP (277 aa)). The C2HC MYST-type; degenerate zinc-finger motif lies at 253–278 (VYIDEFCLSYFDNKRAFERHRTKCTL). An ESA1-RPD3 motif motif is present at residues 303–324 (RTWCRNLCLLSKLFLDHKTLYY). Lys320 carries the N6-acetyllysine; by autocatalysis modification. Residues 361 to 365 (ACILT) and 370 to 376 (QRRGYGR) each bind acetyl-CoA. Residue Glu396 is the Proton donor/acceptor of the active site. Ser400 contributes to the acetyl-CoA binding site.

This sequence belongs to the MYST (SAS/MOZ) family. Component of the NuA4 histone acetyltransferase complex. Autoacetylation at Lys-320 is required for proper function.

Its subcellular location is the nucleus. It is found in the chromosome. It carries out the reaction L-lysyl-[histone] + acetyl-CoA = N(6)-acetyl-L-lysyl-[histone] + CoA + H(+). It catalyses the reaction L-lysyl-[protein] + acetyl-CoA = N(6)-acetyl-L-lysyl-[protein] + CoA + H(+). The enzyme catalyses 2-hydroxyisobutanoyl-CoA + L-lysyl-[protein] = N(6)-(2-hydroxyisobutanoyl)-L-lysyl-[protein] + CoA + H(+). The catalysed reaction is (2E)-butenoyl-CoA + L-lysyl-[protein] = N(6)-(2E)-butenoyl-L-lysyl-[protein] + CoA + H(+). Catalytic component of the NuA4 histone acetyltransferase (HAT) complex which is involved in epigenetic transcriptional activation of selected genes principally by acetylation of nucleosomal histones H4, H3, H2B, H2A and H2A variant H2A.Z. Acetylates histone H4 to form H4K5ac, H4K8ac, H4K12ac and H4K16ac, histone H3 to form H3K14ac, and histone H2A to form H2AK4ac and H2AK7ac. The NuA4 complex is involved in the DNA damage response and is required for chromosome segregation. The NuA4 complex plays a direct role in repair of DNA double-strand breaks (DSBs) through homologous recombination. Recruitment to promoters depends on H3K4me. Also acetylates non-histone proteins. In addition to protein acetyltransferase, can use different acyl-CoA substrates, such as 2-hydroxyisobutanoyl-CoA (2-hydroxyisobutyryl-CoA) or (2E)-butenoyl-CoA (crotonyl-CoA), and is able to mediate protein 2-hydroxyisobutyrylation and crotonylation, respectively. In Emericella nidulans (strain FGSC A4 / ATCC 38163 / CBS 112.46 / NRRL 194 / M139) (Aspergillus nidulans), this protein is Histone acetyltransferase esa1 (esa1).